A 722-amino-acid polypeptide reads, in one-letter code: Methionine--tRNA ligase (722 aa).

The 'HIGH' region motif lies at 11–21 (PYANGPIHAGH). Zn(2+)-binding residues include C143, C146, C156, and C159. Positions 344-348 (KFSTS) match the 'KMSKS' region motif. T347 contacts ATP. The tRNA-binding domain maps to 622–722 (DFAKLDLRVG…KEVKLGAKVR (101 aa)).

The protein belongs to the class-I aminoacyl-tRNA synthetase family. MetG type 1 subfamily. In terms of assembly, homodimer. Zn(2+) is required as a cofactor.

Its subcellular location is the cytoplasm. It carries out the reaction tRNA(Met) + L-methionine + ATP = L-methionyl-tRNA(Met) + AMP + diphosphate. Functionally, is required not only for elongation of protein synthesis but also for the initiation of all mRNA translation through initiator tRNA(fMet) aminoacylation. This is Methionine--tRNA ligase from Pyrococcus abyssi (strain GE5 / Orsay).